A 173-amino-acid polypeptide reads, in one-letter code: ATP-dependent protease subunit HslV (173 aa).

Residue threonine 2 is part of the active site. Glycine 157, cysteine 160, and threonine 163 together coordinate Na(+).

It belongs to the peptidase T1B family. HslV subfamily. In terms of assembly, a double ring-shaped homohexamer of HslV is capped on each side by a ring-shaped HslU homohexamer. The assembly of the HslU/HslV complex is dependent on binding of ATP.

The protein localises to the cytoplasm. The catalysed reaction is ATP-dependent cleavage of peptide bonds with broad specificity.. Allosterically activated by HslU binding. Protease subunit of a proteasome-like degradation complex believed to be a general protein degrading machinery. The chain is ATP-dependent protease subunit HslV from Nitrosomonas eutropha (strain DSM 101675 / C91 / Nm57).